The following is a 270-amino-acid chain: Cyclase-like protein 3 (270 aa).

The N-terminal stretch at 1–23 (MMAHLAPLFLLLLLLLLPLHAAA) is a signal peptide.

It belongs to the Cyclase 1 superfamily. In terms of tissue distribution, highly expressed in leaf sheaths. leaf collars and flag leaves. Expressed in roots, stems, glumes, young panicles and pistils.

The protein localises to the secreted. It is found in the extracellular space. It localises to the extracellular matrix. Its function is as follows. May be involved in response to stresses. The sequence is that of Cyclase-like protein 3 from Oryza sativa subsp. japonica (Rice).